Here is a 679-residue protein sequence, read N- to C-terminus: MPSEVTPKVPERPSRRKTSELFPLSGSESGDIKANSEPPTPAGTPNVPTRRPILKAKTMTSFESGMDQESLPKVPLQRPVRRSTTEELNNVMNNTSKELEEIESLISKHNIHNVSRKKSPTSVEEGKVAAIHQNGQRSASDNKTSTNPSPLEKNEHEGAEGNESAISPSNLVNKSNNEVTEHSDSEDLTEKQKVHAALDNEAGDRSHFEEKLIPGDMKVQVDVSKDVEEGSLNALPPSGITESDDKAEKFTKHPESSLEELQKHQEQQEEKIFQNPTDEESTTSLNEKQEGKDNMEVNSQPQGPSDTETVIAATSSNVPSQIASEEENDVPVIPRSRPKKDFEAHVQKEELPNTQEKRVSEECDSTLISTEEESKIPKIPSERPKRRAPPPVPKKPSSRIAAFQEMLQKQQQQDLHNNGNSSATTASADIAKKHTDSSITSDTTKADFTSKLNGLFALPGMVNPGQLPPSLEKKLSSPDTESKLGPQDQSQAKTGPLGGTRRGRGPRGRKLPSKVASVEKIEEDDNTNKIEIFNNWNVSSSFSKEKVLIDTTPGEQAERALDEKSKSIPEEQREQSPNKMEAALCPFELDEKEKLPANAESDPLSQLPQTNAVGNRKAISEESLSPSEAIANRDQNDTTEIQEQQMEDQMEVDMERELSGGYEDVDSALHSEEASFHSL.

Residues 1-85 (MPSEVTPKVP…LQRPVRRSTT (85 aa)) form a disordered region. Over residues 9-19 (VPERPSRRKTS) the composition is skewed to basic and acidic residues. A Phosphothreonine modification is found at Thr-18. Position 36 is a phosphoserine (Ser-36). Thr-58 carries the post-translational modification Phosphothreonine. Ser-70 is subject to Phosphoserine. Residue Thr-85 is modified to Phosphothreonine. Ser-104 carries the phosphoserine modification. The span at 110–119 (NIHNVSRKKS) shows a compositional bias: basic residues. Disordered stretches follow at residues 110 to 522 (NIHN…EKIE), 549 to 580 (IDTT…PNKM), and 593 to 679 (EKLP…FHSL). 2 stretches are compositionally biased toward polar residues: residues 133 to 149 (QNGQ…TNPS) and 164 to 178 (SAIS…SNNE). The segment covering 179–213 (VTEHSDSEDLTEKQKVHAALDNEAGDRSHFEEKLI) has biased composition (basic and acidic residues). Residues Ser-183, Ser-206, and Ser-231 each carry the phosphoserine modification. Over residues 243 to 272 (SDDKAEKFTKHPESSLEELQKHQEQQEEKI) the composition is skewed to basic and acidic residues. The residue at position 277 (Thr-277) is a Phosphothreonine. Ser-284 is modified (phosphoserine). Positions 296–323 (EVNSQPQGPSDTETVIAATSSNVPSQIA) are enriched in polar residues. Ser-324 carries the phosphoserine modification. Composition is skewed to basic and acidic residues over residues 339 to 361 (KKDF…RVSE) and 372 to 383 (EESKIPKIPSER). The segment at 383-396 (RPKRRAPPPVPKKP) is interaction with SH3 domain of ABP1. Composition is skewed to polar residues over residues 414–427 (DLHN…TTAS) and 437–452 (SSIT…TSKL). Basic and acidic residues predominate over residues 471 to 482 (LEKKLSSPDTES). Residues 501-512 (RRGRGPRGRKLP) show a composition bias toward basic residues. At Thr-552 the chain carries Phosphothreonine. A compositionally biased stretch (basic and acidic residues) spans 556–576 (QAERALDEKSKSIPEEQREQS). The residue at position 576 (Ser-576) is a Phosphoserine. Over residues 603-613 (PLSQLPQTNAV) the composition is skewed to polar residues. Phosphoserine occurs at positions 620, 623, 625, 627, 667, 671, 675, and 678. Positions 667–679 (SALHSEEASFHSL) are enriched in basic and acidic residues.

The protein belongs to the AIM21 family. As to quaternary structure, interacts with ribosomes. Interacts with ABP1.

It localises to the cytoplasm. The protein localises to the cytoskeleton. The protein resides in the actin patch. Functionally, involved in mitochondrial migration along actin filaments. The protein is Altered inheritance of mitochondria protein 21 (AIM21) of Saccharomyces cerevisiae (strain ATCC 204508 / S288c) (Baker's yeast).